Consider the following 43-residue polypeptide: Thaumatin-like protein 1 (43 aa).

This sequence belongs to the thaumatin family.

The sequence is that of Thaumatin-like protein 1 from Glebionis coronaria (Crown daisy).